The following is a 63-amino-acid chain: Muscarinic toxin 2 (63 aa).

Intrachain disulfides connect C3–C22, C17–C42, C44–C55, and C56–C61.

Belongs to the three-finger toxin family. Short-chain subfamily. Type B muscarinic toxin sub-subfamily. As to quaternary structure, monomer. In terms of tissue distribution, expressed by the venom gland.

It is found in the secreted. In terms of biological role, blocks M2 muscarinic acetylcholine receptors (CHRM2). Fully blocks the binding of N-methylscopolamine (NMS) and oxotremorine-M to M2 receptors, slightly increased NMS binding to M1 receptors. This is Muscarinic toxin 2 from Dendroaspis angusticeps (Eastern green mamba).